The sequence spans 1496 residues: Synaptojanin-2 (1496 aa).

An SAC domain is found at L120 to G444. Residues D889–K968 enclose the RRM domain. 4 disordered regions span residues N1027–D1073, G1085–K1166, A1190–A1405, and N1427–G1473. The segment covering R1101–T1115 has biased composition (pro residues). Phosphoserine occurs at positions 1124 and 1191. The segment covering S1124–Q1140 has biased composition (polar residues). Pro residues-rich tracts occupy residues P1221 to V1235 and V1319 to V1332. A compositionally biased stretch (low complexity) spans A1340–L1359. 2 stretches are compositionally biased toward polar residues: residues F1383 to S1394 and N1427 to R1442.

The protein belongs to the synaptojanin family. It in the central section; belongs to the inositol 1,4,5-trisphosphate 5-phosphatase family. In terms of assembly, binds to GRB2. Isoform 2A binds to SYNJ2BP/OMP25. Isoform 2B2 C-terminal proline-rich region binds to a variety of SH3 domain-containing proteins including SH3GL1, SH3GL2, SH3GL3 and GRB2.

The protein resides in the cytoplasm. Its subcellular location is the cell membrane. It is found in the membrane raft. The protein localises to the presynapse. It localises to the cytoskeleton. It catalyses the reaction a 1,2-diacyl-sn-glycero-3-phospho-(1D-myo-inositol-4,5-bisphosphate) + H2O = a 1,2-diacyl-sn-glycero-3-phospho-(1D-myo-inositol 4-phosphate) + phosphate. Functionally, inositol 5-phosphatase which may be involved in distinct membrane trafficking and signal transduction pathways. May mediate the inhibitory effect of Rac1 on endocytosis. This chain is Synaptojanin-2 (SYNJ2), found in Homo sapiens (Human).